The sequence spans 285 residues: MGNLFCCVQVDQSTVAIKEQFGKYRDVLEPGCHCVPWFLGSQLAGHLSLRVQQLDVRCETKTKDNVFVNVVASIQYRALADKANEAFYKLSNTKGQIQAYVFDVIRASVPKLNLDDVFEQKNEIAKSVEEELEKAMSAYGYEIVQTLIVDIVPDEHVKRAMNEINAAARLRVAANEKAEAEKILQIKRAEGEAESKYLSGLGIARQRQAIVDGLRDSVLGFSVNVPGTTAKDVMDMVLVTQYFDTMKEIGAASKSSAVFIPHGPGAVKNVAQQIRDGLLQASVGH.

G2 carries N-myristoyl glycine lipidation. The stretch at 118–190 (FEQKNEIAKS…EKILQIKRAE (73 aa)) forms a coiled coil.

As to quaternary structure, homo- and heterodimer. Interacts with LRR1 (via LRR domain). Constitutively expressed in stems, roots and flowers, but not in leaves and fruits.

Its function is as follows. Positive regulator of hypersensitive response (HR)-like cell death. May be involved in potassium ion channel regulation. This is Hypersensitive-induced reaction 1 protein from Capsicum annuum (Capsicum pepper).